The chain runs to 291 residues: MTTLAIDIGGTKLAAALIGADGQIRDRRELPTPASQTPQALRDALSALVSPLQAHAQRVAIASTGIIRDGSLLALNPHNLGGLLHFPLVKTLEQLTNLPTIAINDAQAAAWAEYQALDGDITDMVFITVSTGVGGGVVSGGKLRTGPGGLAGHIGHTLADPHGPVCGCGRTGCVEAIASGRGIATAAQGELAGANAKTIFTRAGQGDEQAQQLIHRSARTLARLIADIKATTDCQCVVVGGSVGLAEGYLALVETYLAQEPAAFHVDLLAAHYRHDAGLLGAALLAQGEIL.

ATP is bound by residues 5–12 (AIDIGGTK) and 132–139 (GVGGGVVS). Residues histidine 156, cysteine 166, cysteine 168, and cysteine 173 each coordinate Zn(2+).

It belongs to the ROK (NagC/XylR) family. NanK subfamily. In terms of assembly, homodimer.

The enzyme catalyses an N-acyl-D-mannosamine + ATP = an N-acyl-D-mannosamine 6-phosphate + ADP + H(+). It functions in the pathway amino-sugar metabolism; N-acetylneuraminate degradation; D-fructose 6-phosphate from N-acetylneuraminate: step 2/5. Its function is as follows. Catalyzes the phosphorylation of N-acetylmannosamine (ManNAc) to ManNAc-6-P. This chain is N-acetylmannosamine kinase (nanK1), found in Escherichia coli O6:H1 (strain CFT073 / ATCC 700928 / UPEC).